A 293-amino-acid polypeptide reads, in one-letter code: ATP phosphoribosyltransferase (293 aa).

It belongs to the ATP phosphoribosyltransferase family. Long subfamily. Mg(2+) is required as a cofactor.

It localises to the cytoplasm. The enzyme catalyses 1-(5-phospho-beta-D-ribosyl)-ATP + diphosphate = 5-phospho-alpha-D-ribose 1-diphosphate + ATP. Its pathway is amino-acid biosynthesis; L-histidine biosynthesis; L-histidine from 5-phospho-alpha-D-ribose 1-diphosphate: step 1/9. Its activity is regulated as follows. Feedback inhibited by histidine. In terms of biological role, catalyzes the condensation of ATP and 5-phosphoribose 1-diphosphate to form N'-(5'-phosphoribosyl)-ATP (PR-ATP). Has a crucial role in the pathway because the rate of histidine biosynthesis seems to be controlled primarily by regulation of HisG enzymatic activity. The polypeptide is ATP phosphoribosyltransferase (Nitratidesulfovibrio vulgaris (strain ATCC 29579 / DSM 644 / CCUG 34227 / NCIMB 8303 / VKM B-1760 / Hildenborough) (Desulfovibrio vulgaris)).